A 150-amino-acid chain; its full sequence is Endoribonuclease YbeY (150 aa).

Positions 112, 116, and 122 each coordinate Zn(2+).

It belongs to the endoribonuclease YbeY family. The cofactor is Zn(2+).

It localises to the cytoplasm. Its function is as follows. Single strand-specific metallo-endoribonuclease involved in late-stage 70S ribosome quality control and in maturation of the 3' terminus of the 16S rRNA. In Geobacter metallireducens (strain ATCC 53774 / DSM 7210 / GS-15), this protein is Endoribonuclease YbeY.